A 536-amino-acid chain; its full sequence is 2,3-bisphosphoglycerate-independent phosphoglycerate mutase (536 aa).

Asp19 and Ser69 together coordinate Mn(2+). The active-site Phosphoserine intermediate is Ser69. Residues His130, 160-161, Arg192, Arg198, 262-265, and Lys335 each bind substrate; these read RD and RPDR. Mn(2+)-binding residues include Asp402, His406, Asp443, His444, and His461.

Belongs to the BPG-independent phosphoglycerate mutase family. As to quaternary structure, monomer. It depends on Mn(2+) as a cofactor.

It carries out the reaction (2R)-2-phosphoglycerate = (2R)-3-phosphoglycerate. The protein operates within carbohydrate degradation; glycolysis; pyruvate from D-glyceraldehyde 3-phosphate: step 3/5. Functionally, catalyzes the interconversion of 2-phosphoglycerate and 3-phosphoglycerate. This is 2,3-bisphosphoglycerate-independent phosphoglycerate mutase from Gloeobacter violaceus (strain ATCC 29082 / PCC 7421).